The sequence spans 547 residues: Eukaryotic translation initiation factor 3 subunit D (547 aa).

Disordered regions lie at residues 1-22 (MANFVLPPIHDNSDGSWGPSTS) and 114-159 (SVRG…TRDS). Residues 126–148 (GRGGQRGGFSTRGGRGGARGGYG) are compositionally biased toward gly residues. An RNA gate region spans residues 284-298 (PLDYITVNENAADPP).

The protein belongs to the eIF-3 subunit D family. In terms of assembly, component of the eukaryotic translation initiation factor 3 (eIF-3) complex.

The protein localises to the cytoplasm. Its function is as follows. mRNA cap-binding component of the eukaryotic translation initiation factor 3 (eIF-3) complex, which is involved in protein synthesis of a specialized repertoire of mRNAs and, together with other initiation factors, stimulates binding of mRNA and methionyl-tRNAi to the 40S ribosome. The eIF-3 complex specifically targets and initiates translation of a subset of mRNAs involved in cell proliferation. In the eIF-3 complex, eif3d specifically recognizes and binds the 7-methylguanosine cap of a subset of mRNAs. In Cryptococcus neoformans var. neoformans serotype D (strain B-3501A) (Filobasidiella neoformans), this protein is Eukaryotic translation initiation factor 3 subunit D.